A 313-amino-acid polypeptide reads, in one-letter code: Ribosomal RNA small subunit methyltransferase H (313 aa).

S-adenosyl-L-methionine is bound by residues 35 to 37, aspartate 55, phenylalanine 79, aspartate 101, and glutamine 108; that span reads GGH.

Belongs to the methyltransferase superfamily. RsmH family.

The protein resides in the cytoplasm. The enzyme catalyses cytidine(1402) in 16S rRNA + S-adenosyl-L-methionine = N(4)-methylcytidine(1402) in 16S rRNA + S-adenosyl-L-homocysteine + H(+). Specifically methylates the N4 position of cytidine in position 1402 (C1402) of 16S rRNA. The chain is Ribosomal RNA small subunit methyltransferase H from Enterobacter sp. (strain 638).